The sequence spans 160 residues: uncharacterized protein (160 aa).

The Cupin type-2 domain occupies 37–110 (LMSLKPKEDI…TDYLKLYTIY (74 aa)).

The protein resides in the virion. This is an uncharacterized protein from Acanthamoeba polyphaga mimivirus (APMV).